The sequence spans 155 residues: Glutamyl-tRNA(Gln) amidotransferase subunit C, chloroplastic/mitochondrial (155 aa).

Residues 1-52 (MATRALLAVIYASPNRCYISPSRIKIQSLTCSSSSHYYQRQSRKNHRIARSY) constitute a chloroplast and mitochondrion transit peptide.

The protein belongs to the GatC family. As to quaternary structure, subunit of the heterotrimeric GatCAB amidotransferase (AdT) complex, composed of A, B and C subunits.

It is found in the mitochondrion. Its subcellular location is the plastid. It localises to the chloroplast. It catalyses the reaction L-glutamyl-tRNA(Gln) + L-glutamine + ATP + H2O = L-glutaminyl-tRNA(Gln) + L-glutamate + ADP + phosphate + H(+). Its function is as follows. Allows the formation of correctly charged Gln-tRNA(Gln) through the transamidation of misacylated Glu-tRNA(Gln) in chloroplasts and mitochondria. The reaction takes place in the presence of glutamine and ATP through an activated gamma-phospho-Glu-tRNA(Gln). This Arabidopsis thaliana (Mouse-ear cress) protein is Glutamyl-tRNA(Gln) amidotransferase subunit C, chloroplastic/mitochondrial.